The following is a 146-amino-acid chain: Envelope protein OPG155 (146 aa).

Residues 1-21 (MNSLSIFFIVVATAAVCLLFI) form a helical; Signal-anchor for type II membrane protein membrane-spanning segment. Residues 22–146 (QGYSIYENYG…AECQFLKSVL (125 aa)) are Virion surface-facing.

It belongs to the orthopoxvirus OPG155 protein family. Part of a stable entry-fusion complex (EFC) which is at least composed of proteins OPG143, OPG147, OPG155, OPG086, OPG094, OPG107, OPG104, and OPG099. Formation of the viral membrane is necessary for the assembly of the complex. Interacts directly with protein OPG107. Post-translationally, contains two intramolecular disulfide bonds. They are created by the viral disulfide bond formation pathway, a poxvirus-specific pathway that operates on the cytoplasmic side of the MV membranes.

Its subcellular location is the virion membrane. In terms of biological role, envelope protein required for virus entry into host cell and for cell-cell fusion (syncytium formation). This chain is Envelope protein OPG155 (OPG155), found in Cowpox virus (strain GRI-90 / Grishak) (CPV).